The chain runs to 606 residues: MSSCINPSTLVTSVNAFKCLPLATNKAAIRIMAKYKPVQCLISAKYDNLTVDRRSANYQPSIWDHDFLQSLNSNYTDEAYKRRAEELRGKVKIAIKDVIEPLDQLELIDNLQRLGLAHRFETEIRNILNNIYNNNKDYNWRKENLYATSLEFRLLRQHGYPVSQEVFNGFKDDQGGFICDDFKGILSLHEASYYSLEGESIMEEAWQFTSKHLKEVMISKNMEEDVFVAEQAKRALELPLHWKVPMLEARWFIHIYERREDKNHLLLELAKMEFNTLQAIYQEELKEISGWWKDTGLGEKLSFARNRLVASFLWSMGIAFEPQFAYCRRVLTISIALITVIDDIYDVYGTLDELEIFTDAVERWDINYALKHLPGYMKMCFLALYNFVNEFAYYVLKQQDFDLLLSIKNAWLGLIQAYLVEAKWYHSKYTPKLEEYLENGLVSITGPLIITISYLSGTNPIIKKELEFLESNPDIVHWSSKIFRLQDDLGTSSDEIQRGDVPKSIQCYMHETGASEEVARQHIKDMMRQMWKKVNAYTADKDSPLTGTTTEFLLNLVRMSHFMYLHGDGHGVQNQETIDVGFTLLFQPIPLEDKHMAFTASPGTKG.

Residues 1–32 (MSSCINPSTLVTSVNAFKCLPLATNKAAIRIM) constitute a chloroplast transit peptide. 2 residues coordinate Mn(2+): Asp-342 and Asp-346. The substrate site is built by Asp-342, Asp-346, Arg-484, Asp-487, and Lys-503. The short motif at 342–346 (DDIYD) is the DDXXD motif element. Asp-487 lines the Mn(2+) pocket.

The protein belongs to the terpene synthase family. The cofactor is Mg(2+). Requires Mn(2+) as cofactor.

It is found in the plastid. The protein resides in the chloroplast. The enzyme catalyses (2E)-geranyl diphosphate = (4R)-limonene + diphosphate. The polypeptide is (R)-limonene synthase 1, chloroplastic (Citrus limon (Lemon)).